An 82-amino-acid polypeptide reads, in one-letter code: Photosystem I iron-sulfur center (82 aa).

4Fe-4S ferredoxin-type domains follow at residues 2–31 (AHSV…MVPW) and 40–69 (IAAA…IRVY). Positions 11, 14, 17, 21, 49, 52, 55, and 59 each coordinate [4Fe-4S] cluster.

As to quaternary structure, the cyanobacterial PSI reaction center is composed of one copy each of PsaA,B,C,D,E,F,I,J,K,L,M and X, and forms trimeric complexes. The cofactor is [4Fe-4S] cluster.

Its subcellular location is the cellular thylakoid membrane. The enzyme catalyses reduced [plastocyanin] + hnu + oxidized [2Fe-2S]-[ferredoxin] = oxidized [plastocyanin] + reduced [2Fe-2S]-[ferredoxin]. Functionally, apoprotein for the two 4Fe-4S centers FA and FB of photosystem I (PSI); essential for photochemical activity. FB is the terminal electron acceptor of PSI, donating electrons to ferredoxin. The C-terminus interacts with PsaA/B/D and helps assemble the protein into the PSI complex. Required for binding of PsaD and PsaE to PSI. PSI is a plastocyanin/cytochrome c6-ferredoxin oxidoreductase, converting photonic excitation into a charge separation, which transfers an electron from the donor P700 chlorophyll pair to the spectroscopically characterized acceptors A0, A1, FX, FA and FB in turn. The protein is Photosystem I iron-sulfur center of Synechococcus sp. (strain JA-2-3B'a(2-13)) (Cyanobacteria bacterium Yellowstone B-Prime).